The sequence spans 267 residues: tRNA-cytidine(32) 2-sulfurtransferase (267 aa).

The short motif at 37 to 42 is the PP-loop motif element; it reads SGGKDS. [4Fe-4S] cluster contacts are provided by cysteine 112, cysteine 115, and cysteine 203.

This sequence belongs to the TtcA family. As to quaternary structure, homodimer. It depends on Mg(2+) as a cofactor. [4Fe-4S] cluster serves as cofactor.

The protein localises to the cytoplasm. The enzyme catalyses cytidine(32) in tRNA + S-sulfanyl-L-cysteinyl-[cysteine desulfurase] + AH2 + ATP = 2-thiocytidine(32) in tRNA + L-cysteinyl-[cysteine desulfurase] + A + AMP + diphosphate + H(+). It functions in the pathway tRNA modification. In terms of biological role, catalyzes the ATP-dependent 2-thiolation of cytidine in position 32 of tRNA, to form 2-thiocytidine (s(2)C32). The sulfur atoms are provided by the cysteine/cysteine desulfurase (IscS) system. This chain is tRNA-cytidine(32) 2-sulfurtransferase, found in Dichelobacter nodosus (strain VCS1703A).